Here is a 341-residue protein sequence, read N- to C-terminus: 5-formaminoimidazole-4-carboxamide-1-(beta)-D-ribofuranosyl 5'-monophosphate synthetase (341 aa).

5-amino-1-(5-phospho-beta-D-ribosyl)imidazole-4-carboxamide contacts are provided by His-10 and Thr-77. Residues Asp-106–Ile-317 form the ATP-grasp domain. ATP-binding positions include Asp-132–Tyr-188 and Glu-210. Asn-238 is a binding site for 5-amino-1-(5-phospho-beta-D-ribosyl)imidazole-4-carboxamide. Glu-277 and Glu-290 together coordinate Mg(2+).

It belongs to the phosphohexose mutase family. Mg(2+) serves as cofactor. It depends on Mn(2+) as a cofactor.

The catalysed reaction is 5-amino-1-(5-phospho-beta-D-ribosyl)imidazole-4-carboxamide + formate + ATP = 5-formamido-1-(5-phospho-D-ribosyl)imidazole-4-carboxamide + ADP + phosphate. Its pathway is purine metabolism; IMP biosynthesis via de novo pathway; 5-formamido-1-(5-phospho-D-ribosyl)imidazole-4-carboxamide from 5-amino-1-(5-phospho-D-ribosyl)imidazole-4-carboxamide (formate route): step 1/1. Catalyzes the ATP- and formate-dependent formylation of 5-aminoimidazole-4-carboxamide-1-beta-d-ribofuranosyl 5'-monophosphate (AICAR) to 5-formaminoimidazole-4-carboxamide-1-beta-d-ribofuranosyl 5'-monophosphate (FAICAR) in the absence of folates. In Cenarchaeum symbiosum (strain A), this protein is 5-formaminoimidazole-4-carboxamide-1-(beta)-D-ribofuranosyl 5'-monophosphate synthetase.